Consider the following 854-residue polypeptide: Protein unc-33 (854 aa).

3 disordered regions span residues 57 to 114 (ETVS…IPAP), 130 to 327 (ELFG…DGNG), and 794 to 854 (VERV…TGFW). Composition is skewed to polar residues over residues 58-68 (TVSNKSRSSEG) and 75-97 (RPNSRSSAIVKKTSVSSLPTSAR). Positions 193-202 (KVLRGEKSTP) are enriched in basic and acidic residues. Acidic residues predominate over residues 240 to 257 (VDDEEEPEAEAQEMEEPQ). The segment covering 279–298 (HPSEDGDSTRNGETPTDRRN) has biased composition (basic and acidic residues). Polar residues predominate over residues 802-811 (SSQQQKPQQN). Residues 816 to 827 (NSGDFDRNRTKV) are compositionally biased toward basic and acidic residues.

This sequence belongs to the metallo-dependent hydrolases superfamily. Hydantoinase/dihydropyrimidinase family. Isoform a: Probable monomer. Isoform b: Probable homodimer. Isoform c: Probable homodimer. Probable heterodimer composed of isoform b and isoform c. Interacts with unc-14 and kinesin-1 motor complex light chain klc-1; both interactions regulate unc-33 neurite localization. Interacts with fln-1 (via calponin-homology (CH) domains and filamin repeat 18-19). Isoform c: Interacts with vab-8 isoform a. In terms of tissue distribution, expressed in ventral cord and nerve ring (at protein level). Isoform a: Expressed in nerve ring (at protein level). Expressed in the nervous system, two amphid socket cells and weakly in non-neuronal pharyngeal cells.

It is found in the cell projection. The protein resides in the axon. Its subcellular location is the dendrite. Its function is as follows. During neurogenesis, plays an essential role in axonal guidance and outgrowth by regulating the polarization of both microtubule and actin cytoskeletons. Establishes the asymmetry of axonal and dendrite microtubules and the polarized sorting of neuronal proteins. This is achieved in part by regulating the localization of kinesin-like protein unc-104. In neurons without a distal microtubule-organizing center (MTOC), also controls the organization of microtubules in dendrites. During the dorso-ventral axonal guidance and outgrowth of VD neurons, required downstream of Rac GTPases ced-10 and mig-2 to inhibit growth cone filopodial protrusion mediated by the unc-6/netrin receptor unc-40-unc-5. Specifically, regulates growth cone filopodial protrusion polarity, and thus migration, by promoting F-actin polarization and by restricting plus-end microtubule accumulation in the growth cone. Probably downstream of mab-20/Sema2a and mab-20 receptor plx-2, regulates the guidance of DD/VD neuron axons by modulating fln-1 interaction with F-actin which results in the remodeling of the actin cytoskeleton. In hermaphrodites, involved in sex myoblast (SM) migration by regulating the gonad-dependent repulsion of SMs. Functionally, in neurons, required for the polarized sorting of axonal proteins. In PLM neuron, regulates innexin unc-9 gap junction turnover by suppressing unc-9 transport out of gap junctions. Plays a role in locomotion and egg-laying. In terms of biological role, in PLM neuron, regulates innexin unc-9 gap junction turnover by suppressing unc-9 transport out of gap junctions. The polypeptide is Protein unc-33 (Caenorhabditis elegans).